Reading from the N-terminus, the 357-residue chain is P2Y purinoceptor 8 (357 aa).

Residues 1–26 (MVKNGSHLDAETLAMLQNKAISITLP) are Extracellular-facing. Residue N4 is glycosylated (N-linked (GlcNAc...) asparagine). A helical transmembrane segment spans residues 27–47 (VVYTMVAIISIPGNFFSLWVL). Over 48–56 (CWHIKPKTP) the chain is Cytoplasmic. Residues 57–77 (SVIFMINLSITDLLLACCFPF) traverse the membrane as a helical segment. Residues 78-97 (QIFYHIQRNHWIFGKTLCSL) are Extracellular-facing. Cysteines 95 and 174 form a disulfide. A helical membrane pass occupies residues 98-118 (VTVMFYSNMYSSILTMTCISI). Topologically, residues 119–137 (ERYMGVVYPMKLIKWRRKR) are cytoplasmic. A helical transmembrane segment spans residues 138-158 (YALGACVIMWIFLLLAFYPLE). The Extracellular segment spans residues 159-185 (STDLTYEVKELGIITCFDVLKWEMLPN). Residues 186–206 (FAAWVAFLLTLFVVLFLIPFI) form a helical membrane-spanning segment. At 207–236 (VTVGCYIGTIRKLIQTSSRYGNKQKTRSIY) the chain is on the cytoplasmic side. The helical transmembrane segment at 237–257 (LAIIVLSVFITCFAPNNFILL) threads the bilayer. The Extracellular portion of the chain corresponds to 258-271 (AHMIVRLFYEGSLY). A helical transmembrane segment spans residues 272 to 294 (PAYKLTLCLSCLNNCIDPFIYYF). Residues 295 to 357 (ASKEFYQKFM…ICLQRQESVF (63 aa)) are Cytoplasmic-facing.

The protein belongs to the G-protein coupled receptor 1 family.

It is found in the cell membrane. In terms of biological role, probable receptor for purines coupled to G-proteins. This Gallus gallus (Chicken) protein is P2Y purinoceptor 8 (P2RY8).